The primary structure comprises 217 residues: Large ribosomal subunit protein bL25 (217 aa).

Residues 178–217 (VVAPTEEPTEEEIEAMEGEQQTEEPEVVGESKEDEEKTEE) form a disordered region. Acidic residues predominate over residues 184 to 205 (EPTEEEIEAMEGEQQTEEPEVV). The span at 206–217 (GESKEDEEKTEE) shows a compositional bias: basic and acidic residues.

Belongs to the bacterial ribosomal protein bL25 family. CTC subfamily. Part of the 50S ribosomal subunit; part of the 5S rRNA/L5/L18/L25 subcomplex. Contacts the 5S rRNA. Binds to the 5S rRNA independently of L5 and L18.

In terms of biological role, this is one of the proteins that binds to the 5S RNA in the ribosome where it forms part of the central protuberance. The sequence is that of Large ribosomal subunit protein bL25 from Staphylococcus aureus (strain USA300).